The chain runs to 295 residues: HTH-type transcriptional regulator ShiR (295 aa).

Positions 1 to 58 (MEIRWLEGFIAVAEELHFSNAAIRLGMPQSPLSQLIRRLESELGQKLFDRSTRSVELT) constitute an HTH lysR-type domain. A DNA-binding region (H-T-H motif) is located at residues 18-37 (FSNAAIRLGMPQSPLSQLIR).

Belongs to the LysR transcriptional regulatory family.

Its function is as follows. Activates expression of the shikimate transporter ShiA in the presence of shikimate. Binds to the shiA promoter region. This is HTH-type transcriptional regulator ShiR from Corynebacterium glutamicum (strain R).